We begin with the raw amino-acid sequence, 356 residues long: Stomatin-like protein 2, mitochondrial (356 aa).

The transit peptide at 1–28 directs the protein to the mitochondrion; the sequence is MLARAARGTGALLLRGSLLASGRAPRRA. Residue Ser-17 is modified to Phosphoserine; by PKC/PRKCZ. Residue Tyr-124 is modified to Phosphotyrosine. The residue at position 145 (Lys-145) is an N6-acetyllysine; alternate. Residue Lys-145 is modified to N6-succinyllysine; alternate. Residues 215-252 are a coiled coil; the sequence is INVAEGKKQAQILASEAEKAEQINQAAGEASAVLAKAK. Lys-233 is subject to N6-acetyllysine. Residues 321 to 356 are disordered; the sequence is KAPVPGTPDSLSSGSSRDVQGTDASLDEELDRVKMS. Thr-327 bears the Phosphothreonine mark. Residues 329–343 show a composition bias toward polar residues; the sequence is DSLSSGSSRDVQGTD. Ser-330 is modified (phosphoserine).

The protein belongs to the band 7/mec-2 family. Forms homooligomers. Interacts with MFN2; may form heterooligomers. Interacts with CACNA2D2. Interacts with PHB1 and PHB2; recruits them to cardiolipin-enriched mitochondrial membranes and stabilizes them. In terms of processing, hyperphosphorylated at Ser-17 in some patients with monoclonal gammopathy of undetermined significance (MGUS), multiple myeloma (MM) and Waldenstrom macroglobulinemia due to impaired dephosphorylation by PP2A. Ubiquitously expressed at low levels. Expressed in lymphoid tissues (at protein level).

The protein resides in the cell membrane. It localises to the mitochondrion. It is found in the mitochondrion inner membrane. Its subcellular location is the mitochondrion intermembrane space. The protein localises to the membrane raft. The protein resides in the cytoplasm. It localises to the cytoskeleton. Its function is as follows. Mitochondrial protein that probably regulates the biogenesis and the activity of mitochondria. Stimulates cardiolipin biosynthesis, binds cardiolipin-enriched membranes where it recruits and stabilizes some proteins including prohibitin and may therefore act in the organization of functional microdomains in mitochondrial membranes. Through regulation of the mitochondrial function may play a role into several biological processes including cell migration, cell proliferation, T-cell activation, calcium homeostasis and cellular response to stress. May play a role in calcium homeostasis through negative regulation of calcium efflux from mitochondria. Required for mitochondrial hyperfusion a pro-survival cellular response to stress which results in increased ATP production by mitochondria. May also regulate the organization of functional domains at the plasma membrane and play a role in T-cell activation through association with the T-cell receptor signaling complex and its regulation. This chain is Stomatin-like protein 2, mitochondrial (STOML2), found in Homo sapiens (Human).